The primary structure comprises 664 residues: Macoilin (664 aa).

Transmembrane regions (helical) follow at residues 28 to 48, 75 to 95, 120 to 140, and 154 to 174; these read TFLY…DFVL, AFSV…LLFI, VCLP…AIRF, and FAAH…KSYV. Over residues 253 to 265 the composition is skewed to basic and acidic residues; sequence REKGKEKDKDAKK. The interval 253–274 is disordered; sequence REKGKEKDKDAKKHNLGINNNN. At Ser305 the chain carries Phosphoserine. Polar residues predominate over residues 320–348; the sequence is KNYKNASGVVNSSPRSHSATNGSIPSSSS. A disordered region spans residues 320–367; sequence KNYKNASGVVNSSPRSHSATNGSIPSSSSKNEKKQKCTSKSPSAHKDL. N-linked (GlcNAc...) asparagine glycosylation is present at Asn324. The residue at position 332 (Ser332) is a Phosphoserine. Residues Asn340 and Asn452 are each glycosylated (N-linked (GlcNAc...) asparagine). A phosphoserine mark is found at Ser631 and Ser634. Positions 631–664 are disordered; the sequence is SPLSPVSPHYSSKFVETSPSGLDPNASVYQPLKK. Residue Asn655 is glycosylated (N-linked (GlcNAc...) asparagine).

The protein belongs to the macoilin family.

It is found in the rough endoplasmic reticulum membrane. The protein localises to the nucleus membrane. Functionally, plays a role in the regulation of neuronal activity. The polypeptide is Macoilin (MACO1) (Bos taurus (Bovine)).